The following is a 481-amino-acid chain: Aspartyl/glutamyl-tRNA(Asn/Gln) amidotransferase subunit B (481 aa).

It belongs to the GatB/GatE family. GatB subfamily. In terms of assembly, heterotrimer of A, B and C subunits.

It catalyses the reaction L-glutamyl-tRNA(Gln) + L-glutamine + ATP + H2O = L-glutaminyl-tRNA(Gln) + L-glutamate + ADP + phosphate + H(+). It carries out the reaction L-aspartyl-tRNA(Asn) + L-glutamine + ATP + H2O = L-asparaginyl-tRNA(Asn) + L-glutamate + ADP + phosphate + 2 H(+). Functionally, allows the formation of correctly charged Asn-tRNA(Asn) or Gln-tRNA(Gln) through the transamidation of misacylated Asp-tRNA(Asn) or Glu-tRNA(Gln) in organisms which lack either or both of asparaginyl-tRNA or glutaminyl-tRNA synthetases. The reaction takes place in the presence of glutamine and ATP through an activated phospho-Asp-tRNA(Asn) or phospho-Glu-tRNA(Gln). This is Aspartyl/glutamyl-tRNA(Asn/Gln) amidotransferase subunit B from Cellvibrio japonicus (strain Ueda107) (Pseudomonas fluorescens subsp. cellulosa).